Here is a 290-residue protein sequence, read N- to C-terminus: 6-phospho-5-dehydro-2-deoxy-D-gluconate aldolase (290 aa).

Aspartate 85 serves as the catalytic Proton donor. Residues histidine 86 and histidine 180 each coordinate Zn(2+). Glycine 181 contributes to the dihydroxyacetone phosphate binding site. Histidine 208 contacts Zn(2+). Dihydroxyacetone phosphate-binding positions include 209–211 (GAS) and 230–233 (NINT). Threonine 233 is subject to Phosphothreonine.

It belongs to the class II fructose-bisphosphate aldolase family. IolJ subfamily. Zn(2+) is required as a cofactor.

It catalyses the reaction 6-phospho-5-dehydro-2-deoxy-D-gluconate = 3-oxopropanoate + dihydroxyacetone phosphate. It functions in the pathway polyol metabolism; myo-inositol degradation into acetyl-CoA; acetyl-CoA from myo-inositol: step 6/7. Its function is as follows. Produces dihydroxyacetone phosphate (DHAP or glycerone phosphate) and malonic semialdehyde (MSA or 3-oxopropanoate) from 6-phospho-5-dehydro-2-deoxy-D-gluconate (DKGP). The polypeptide is 6-phospho-5-dehydro-2-deoxy-D-gluconate aldolase (iolJ) (Bacillus subtilis (strain 168)).